A 160-amino-acid chain; its full sequence is Lipoprotein signal peptidase (160 aa).

The next 2 membrane-spanning stretches (helical) occupy residues 63 to 83 and 89 to 109; these read YRLP…AVTF and DQHL…GNLI. Residues Asp-119 and Asp-137 contribute to the active site. The helical transmembrane segment at 132–152 threads the bilayer; sequence AFNVADSAICVGVALLAVDMI.

Belongs to the peptidase A8 family.

The protein resides in the cell inner membrane. It catalyses the reaction Release of signal peptides from bacterial membrane prolipoproteins. Hydrolyzes -Xaa-Yaa-Zaa-|-(S,diacylglyceryl)Cys-, in which Xaa is hydrophobic (preferably Leu), and Yaa (Ala or Ser) and Zaa (Gly or Ala) have small, neutral side chains.. It participates in protein modification; lipoprotein biosynthesis (signal peptide cleavage). In terms of biological role, this protein specifically catalyzes the removal of signal peptides from prolipoproteins. This is Lipoprotein signal peptidase from Geobacter sulfurreducens (strain ATCC 51573 / DSM 12127 / PCA).